Here is a 263-residue protein sequence, read N- to C-terminus: Phosphoinositide-3-kinase-interacting protein 1 (263 aa).

The signal sequence occupies residues methionine 1–glycine 21. Over serine 22 to threonine 168 the chain is Extracellular. Residues glycine 24–cysteine 101 form the Kringle domain. 3 cysteine pairs are disulfide-bonded: cysteine 25-cysteine 101, cysteine 46-cysteine 82, and cysteine 70-cysteine 96. Asparagine 98 carries N-linked (GlcNAc...) asparagine glycosylation. The chain crosses the membrane as a helical span at residues leucine 169–isoleucine 189. The Cytoplasmic segment spans residues leucine 190 to alanine 263. The segment covering glutamine 242–serine 251 has biased composition (polar residues). The segment at glutamine 242–alanine 263 is disordered.

Its subcellular location is the cell membrane. Negative regulator of hepatic phosphatidylinositol 3-kinase (PI3K) activity. This chain is Phosphoinositide-3-kinase-interacting protein 1 (PIK3IP1), found in Pongo abelii (Sumatran orangutan).